Here is a 624-residue protein sequence, read N- to C-terminus: Threonine--tRNA ligase (624 aa).

The interval 1 to 143 is editing domain; sequence MRLLFIHADE…SRTVTPEAAE (143 aa). Residues 197 to 499 form a catalytic region; that stretch reads AHVKLMREKE…EQEGKLPTLP (303 aa). Cys289, His340, and His467 together coordinate Zn(2+). The tract at residues 598-624 is disordered; sequence LERETEGKPRVPLTIPDRLSRRPRFGR.

It belongs to the class-II aminoacyl-tRNA synthetase family. As to quaternary structure, homodimer. Requires Zn(2+) as cofactor.

It is found in the cytoplasm. The catalysed reaction is tRNA(Thr) + L-threonine + ATP = L-threonyl-tRNA(Thr) + AMP + diphosphate + H(+). Catalyzes the attachment of threonine to tRNA(Thr) in a two-step reaction: L-threonine is first activated by ATP to form Thr-AMP and then transferred to the acceptor end of tRNA(Thr). Also edits incorrectly charged L-seryl-tRNA(Thr). The chain is Threonine--tRNA ligase from Methanopyrus kandleri (strain AV19 / DSM 6324 / JCM 9639 / NBRC 100938).